We begin with the raw amino-acid sequence, 123 residues long: MALKIRLARGGSKKRPYYHVVLADARSPRDGRFLENLGSWNPMLAKDDEKRVQLNAERIKHWLDNGAQPTDRVLRFLNEAGVAKREAKNNPIKAKPGKRAQERAAEKAQKAADAAAAAADAAE.

Residues 87-123 (AKNNPIKAKPGKRAQERAAEKAQKAADAAAAAADAAE) form a disordered region. Residues 99 to 110 (RAQERAAEKAQK) show a composition bias toward basic and acidic residues. Low complexity predominate over residues 111-123 (AADAAAAAADAAE).

The protein belongs to the bacterial ribosomal protein bS16 family.

In Rhizobium etli (strain CIAT 652), this protein is Small ribosomal subunit protein bS16.